Reading from the N-terminus, the 106-residue chain is UPF0473 protein SSU98_0068 (106 aa).

This sequence belongs to the UPF0473 family.

The sequence is that of UPF0473 protein SSU98_0068 from Streptococcus suis (strain 98HAH33).